The following is a 126-amino-acid chain: Aspartate 1-decarboxylase (126 aa).

Serine 25 acts as the Schiff-base intermediate with substrate; via pyruvic acid in catalysis. A Pyruvic acid (Ser) modification is found at serine 25. Threonine 57 is a substrate binding site. Tyrosine 58 serves as the catalytic Proton donor. 73 to 75 (GAA) is a binding site for substrate.

It belongs to the PanD family. As to quaternary structure, heterooctamer of four alpha and four beta subunits. Pyruvate serves as cofactor. In terms of processing, is synthesized initially as an inactive proenzyme, which is activated by self-cleavage at a specific serine bond to produce a beta-subunit with a hydroxyl group at its C-terminus and an alpha-subunit with a pyruvoyl group at its N-terminus.

It is found in the cytoplasm. It catalyses the reaction L-aspartate + H(+) = beta-alanine + CO2. It participates in cofactor biosynthesis; (R)-pantothenate biosynthesis; beta-alanine from L-aspartate: step 1/1. In terms of biological role, catalyzes the pyruvoyl-dependent decarboxylation of aspartate to produce beta-alanine. In Edwardsiella ictaluri (strain 93-146), this protein is Aspartate 1-decarboxylase.